The following is a 169-amino-acid chain: S-ribosylhomocysteine lyase (169 aa).

The Fe cation site is built by His-54, His-58, and Cys-128.

This sequence belongs to the LuxS family. In terms of assembly, homodimer. Fe cation serves as cofactor.

The enzyme catalyses S-(5-deoxy-D-ribos-5-yl)-L-homocysteine = (S)-4,5-dihydroxypentane-2,3-dione + L-homocysteine. In terms of biological role, involved in the synthesis of autoinducer 2 (AI-2) which is secreted by bacteria and is used to communicate both the cell density and the metabolic potential of the environment. The regulation of gene expression in response to changes in cell density is called quorum sensing. Catalyzes the transformation of S-ribosylhomocysteine (RHC) to homocysteine (HC) and 4,5-dihydroxy-2,3-pentadione (DPD). The protein is S-ribosylhomocysteine lyase of Shewanella putrefaciens (strain CN-32 / ATCC BAA-453).